We begin with the raw amino-acid sequence, 294 residues long: BOI-related E3 ubiquitin-protein ligase 1 (294 aa).

Residues 168–204 (LQERVKNLYVENQIWRDLAQTNEATANNLRSNLEQVL) are WRD domain. Positions 183–212 (RDLAQTNEATANNLRSNLEQVLAQVDDLDA) form a coiled coil. The segment at 244–281 (CKRCGELTASVLVLPCRHLCLCTVCGSSALLRTCPVCD) adopts an RING-type zinc-finger fold.

In terms of assembly, interacts with the DELLA proteins GAI, RGA, RGL1, RGL2 and RGL3.

The enzyme catalyses S-ubiquitinyl-[E2 ubiquitin-conjugating enzyme]-L-cysteine + [acceptor protein]-L-lysine = [E2 ubiquitin-conjugating enzyme]-L-cysteine + N(6)-ubiquitinyl-[acceptor protein]-L-lysine.. The protein operates within protein degradation; proteasomal ubiquitin-dependent pathway. In terms of biological role, E3 ubiquitin-protein ligase involved in regulation of abiotic stress responses. Not involved in ubiquitination of MYB108/BOS1. Has no effect on the stability of the DELLA proteins. In Arabidopsis thaliana (Mouse-ear cress), this protein is BOI-related E3 ubiquitin-protein ligase 1 (BRG1).